The chain runs to 113 residues: UPF0102 protein Shal_4069 (113 aa).

Belongs to the UPF0102 family.

The sequence is that of UPF0102 protein Shal_4069 from Shewanella halifaxensis (strain HAW-EB4).